Here is a 200-residue protein sequence, read N- to C-terminus: Large ribosomal subunit protein uL4 (200 aa).

Residues 42–69 (SKAQKNRSDVSGGGRKPWRQKGTGRARA) are disordered.

Belongs to the universal ribosomal protein uL4 family. In terms of assembly, part of the 50S ribosomal subunit.

Functionally, one of the primary rRNA binding proteins, this protein initially binds near the 5'-end of the 23S rRNA. It is important during the early stages of 50S assembly. It makes multiple contacts with different domains of the 23S rRNA in the assembled 50S subunit and ribosome. Its function is as follows. Forms part of the polypeptide exit tunnel. The sequence is that of Large ribosomal subunit protein uL4 from Alcanivorax borkumensis (strain ATCC 700651 / DSM 11573 / NCIMB 13689 / SK2).